The primary structure comprises 306 residues: Pantothenate kinase (306 aa).

91–98 contributes to the ATP binding site; sequence GSVAVGKS.

It belongs to the prokaryotic pantothenate kinase family.

The protein resides in the cytoplasm. The catalysed reaction is (R)-pantothenate + ATP = (R)-4'-phosphopantothenate + ADP + H(+). The protein operates within cofactor biosynthesis; coenzyme A biosynthesis; CoA from (R)-pantothenate: step 1/5. The polypeptide is Pantothenate kinase (Streptococcus suis (strain 05ZYH33)).